A 75-amino-acid polypeptide reads, in one-letter code: MKQFNYLSHKDLAVVVGGRNNWQTNVGGAVGSAMIGATVGGTICGPACAVAGAHYLPILWTAVTAATGGFGKIRK.

The propeptide occupies M1–G18.

It belongs to the bacteriocin class IIB family. In terms of assembly, this bacteriocin depends upon the complementation of two peptides for activity: LafA and LafX. Associated with a 180 kDa bacteriocin complex.

Its function is as follows. Heat stable bacteriocin active against Enterococcus faecalis and other Lactobacilli. The sequence is that of Bacteriocin lactacin-F subunit LafA (lafA) from Lactobacillus johnsonii (strain CNCM I-12250 / La1 / NCC 533).